Here is a 227-residue protein sequence, read N- to C-terminus: Uracil-DNA glycosylase (227 aa).

The Proton acceptor role is filled by aspartate 68.

Belongs to the uracil-DNA glycosylase (UDG) superfamily. UNG family.

It is found in the cytoplasm. The catalysed reaction is Hydrolyzes single-stranded DNA or mismatched double-stranded DNA and polynucleotides, releasing free uracil.. Functionally, excises uracil residues from the DNA which can arise as a result of misincorporation of dUMP residues by DNA polymerase or due to deamination of cytosine. The chain is Uracil-DNA glycosylase from Mycobacterium avium (strain 104).